A 115-amino-acid polypeptide reads, in one-letter code: Histidine decarboxylase proenzyme (115 aa).

At Ser83 the chain carries Pyruvic acid (Ser).

In terms of assembly, the proenzyme is a hexamer of identical pi chains; each pi chain monomer is cleaved to form a small (or beta) chain and a large (or alpha) chain by non-hydrolytic self-catalysis. Pyruvate serves as cofactor.

The catalysed reaction is L-histidine + H(+) = histamine + CO2. The polypeptide is Histidine decarboxylase proenzyme (Lentilactobacillus buchneri (Lactobacillus buchneri)).